We begin with the raw amino-acid sequence, 212 residues long: Cell division protein SepF (212 aa).

The disordered stretch occupies residues 32-104 (RYADPDTSYD…APLGSDAHRE (73 aa)). The segment covering 64–73 (EAEEDGGDYG) has biased composition (acidic residues).

Belongs to the SepF family. Homodimer. Interacts with FtsZ.

It localises to the cytoplasm. Cell division protein that is part of the divisome complex and is recruited early to the Z-ring. Probably stimulates Z-ring formation, perhaps through the cross-linking of FtsZ protofilaments. Its function overlaps with FtsA. The chain is Cell division protein SepF from Saccharopolyspora erythraea (strain ATCC 11635 / DSM 40517 / JCM 4748 / NBRC 13426 / NCIMB 8594 / NRRL 2338).